A 220-amino-acid chain; its full sequence is Deoxyribose-phosphate aldolase (220 aa).

Catalysis depends on D92, which acts as the Proton donor/acceptor. The active-site Schiff-base intermediate with acetaldehyde is K157. Catalysis depends on K186, which acts as the Proton donor/acceptor.

Belongs to the DeoC/FbaB aldolase family. DeoC type 1 subfamily.

Its subcellular location is the cytoplasm. The enzyme catalyses 2-deoxy-D-ribose 5-phosphate = D-glyceraldehyde 3-phosphate + acetaldehyde. It participates in carbohydrate degradation; 2-deoxy-D-ribose 1-phosphate degradation; D-glyceraldehyde 3-phosphate and acetaldehyde from 2-deoxy-alpha-D-ribose 1-phosphate: step 2/2. In terms of biological role, catalyzes a reversible aldol reaction between acetaldehyde and D-glyceraldehyde 3-phosphate to generate 2-deoxy-D-ribose 5-phosphate. The protein is Deoxyribose-phosphate aldolase of Caldicellulosiruptor saccharolyticus (strain ATCC 43494 / DSM 8903 / Tp8T 6331).